The chain runs to 79 residues: TALFLAMHYTSDIATAFSSVAHICRDVNYGWLIRNMHANGASFLFICIYLHIGRGLYYGSYLYKETWNIGVILLLLTMM.

3 consecutive transmembrane segments (helical) span residues 1–7 (TALFLAM), 31–52 (WLIR…YLHI), and 67–79 (WNIG…LTMM). His-37 and His-51 together coordinate heme b.

This sequence belongs to the cytochrome b family. As to quaternary structure, the cytochrome bc1 complex contains 3 respiratory subunits (MT-CYB, CYC1 and UQCRFS1), 2 core proteins (UQCRC1 and UQCRC2) and probably 6 low-molecular weight proteins. The cofactor is heme b.

The protein resides in the mitochondrion inner membrane. Functionally, component of the ubiquinol-cytochrome c reductase complex (complex III or cytochrome b-c1 complex) that is part of the mitochondrial respiratory chain. The b-c1 complex mediates electron transfer from ubiquinol to cytochrome c. Contributes to the generation of a proton gradient across the mitochondrial membrane that is then used for ATP synthesis. The protein is Cytochrome b (mt-cyb) of Julidochromis regani (Convict julie).